Here is a 73-residue protein sequence, read N- to C-terminus: Protein SlyX homolog (73 aa).

Belongs to the SlyX family.

In Actinobacillus pleuropneumoniae serotype 5b (strain L20), this protein is Protein SlyX homolog.